We begin with the raw amino-acid sequence, 98 residues long: Small ribosomal subunit protein bS20 (98 aa).

A compositionally biased stretch (basic residues) spans 1–15 (MAPKKTTKKGGPKKR). Residues 1-21 (MAPKKTTKKGGPKKRPSAEKR) are disordered.

This sequence belongs to the bacterial ribosomal protein bS20 family.

Functionally, binds directly to 16S ribosomal RNA. In Chlamydia felis (strain Fe/C-56) (Chlamydophila felis), this protein is Small ribosomal subunit protein bS20.